Here is a 225-residue protein sequence, read N- to C-terminus: NAD(P)H-quinone oxidoreductase subunit K, chloroplastic (225 aa).

Residues Cys43, Cys44, Cys108, and Cys139 each contribute to the [4Fe-4S] cluster site.

The protein belongs to the complex I 20 kDa subunit family. As to quaternary structure, NDH is composed of at least 16 different subunits, 5 of which are encoded in the nucleus. [4Fe-4S] cluster is required as a cofactor.

Its subcellular location is the plastid. The protein localises to the chloroplast thylakoid membrane. It carries out the reaction a plastoquinone + NADH + (n+1) H(+)(in) = a plastoquinol + NAD(+) + n H(+)(out). The enzyme catalyses a plastoquinone + NADPH + (n+1) H(+)(in) = a plastoquinol + NADP(+) + n H(+)(out). Functionally, NDH shuttles electrons from NAD(P)H:plastoquinone, via FMN and iron-sulfur (Fe-S) centers, to quinones in the photosynthetic chain and possibly in a chloroplast respiratory chain. The immediate electron acceptor for the enzyme in this species is believed to be plastoquinone. Couples the redox reaction to proton translocation, and thus conserves the redox energy in a proton gradient. The chain is NAD(P)H-quinone oxidoreductase subunit K, chloroplastic from Triticum aestivum (Wheat).